The sequence spans 161 residues: 6,7-dimethyl-8-ribityllumazine synthase (161 aa).

Residues Trp31, Thr65–Glu67, and Cys89–Val91 each bind 5-amino-6-(D-ribitylamino)uracil. Asp94 to Thr95 is a (2S)-2-hydroxy-3-oxobutyl phosphate binding site. Catalysis depends on His97, which acts as the Proton donor. Residue Phe122 participates in 5-amino-6-(D-ribitylamino)uracil binding. Arg136 contacts (2S)-2-hydroxy-3-oxobutyl phosphate.

This sequence belongs to the DMRL synthase family.

The enzyme catalyses (2S)-2-hydroxy-3-oxobutyl phosphate + 5-amino-6-(D-ribitylamino)uracil = 6,7-dimethyl-8-(1-D-ribityl)lumazine + phosphate + 2 H2O + H(+). The protein operates within cofactor biosynthesis; riboflavin biosynthesis; riboflavin from 2-hydroxy-3-oxobutyl phosphate and 5-amino-6-(D-ribitylamino)uracil: step 1/2. Its function is as follows. Catalyzes the formation of 6,7-dimethyl-8-ribityllumazine by condensation of 5-amino-6-(D-ribitylamino)uracil with 3,4-dihydroxy-2-butanone 4-phosphate. This is the penultimate step in the biosynthesis of riboflavin. This chain is 6,7-dimethyl-8-ribityllumazine synthase, found in Porphyromonas gingivalis (strain ATCC 33277 / DSM 20709 / CIP 103683 / JCM 12257 / NCTC 11834 / 2561).